The sequence spans 156 residues: ATP synthase subunit b (156 aa).

Residues 7 to 27 (IFFQMLVFFVLGWFTMKFVWP) form a helical membrane-spanning segment.

The protein belongs to the ATPase B chain family. F-type ATPases have 2 components, F(1) - the catalytic core - and F(0) - the membrane proton channel. F(1) has five subunits: alpha(3), beta(3), gamma(1), delta(1), epsilon(1). F(0) has three main subunits: a(1), b(2) and c(10-14). The alpha and beta chains form an alternating ring which encloses part of the gamma chain. F(1) is attached to F(0) by a central stalk formed by the gamma and epsilon chains, while a peripheral stalk is formed by the delta and b chains.

The protein resides in the cell inner membrane. Functionally, f(1)F(0) ATP synthase produces ATP from ADP in the presence of a proton or sodium gradient. F-type ATPases consist of two structural domains, F(1) containing the extramembraneous catalytic core and F(0) containing the membrane proton channel, linked together by a central stalk and a peripheral stalk. During catalysis, ATP synthesis in the catalytic domain of F(1) is coupled via a rotary mechanism of the central stalk subunits to proton translocation. Its function is as follows. Component of the F(0) channel, it forms part of the peripheral stalk, linking F(1) to F(0). The protein is ATP synthase subunit b of Bordetella pertussis (strain Tohama I / ATCC BAA-589 / NCTC 13251).